The sequence spans 99 residues: MKYLLIKNKKLYKLFFKFELKRLQYKSVMLNTRLPNYIRQKAFMYINKLDKNTSYVAIKQRCFLSNNGRSVLNHFKLSRIKLRLLISNNYVNGVKKFNK.

It belongs to the universal ribosomal protein uS14 family.

It localises to the mitochondrion. The chain is Small ribosomal subunit protein uS14m (RPS14) from Acanthamoeba castellanii (Amoeba).